Reading from the N-terminus, the 668-residue chain is COBRA-like protein 11 (668 aa).

A signal peptide spans 1–29 (MKKLRYVHLNLLLLLLPLINLQFPTLSLA). N-linked (GlcNAc...) asparagine glycosylation is found at N69, N125, N254, N318, N329, N358, N412, N432, N473, N552, N560, and N579. The GPI-anchor amidated serine moiety is linked to residue S636. A propeptide spans 637-668 (SGMRLSGIRFLPSILLAITTFHAITDRLLTGV) (removed in mature form).

This sequence belongs to the COBRA family. As to expression, mostly expressed in flowers, stamen, anthers and pollen, and, to a lower extent, possibly in roots, stems, leaves and siliques.

It localises to the cell membrane. Involved in the deposition of apical pectin cap and cellulose microfibrils in pollen tubes. Implicated in pollen tubes growth in the female transmitting tract of pistil and toward micropyles, via the perception of ovule guidance cues. The sequence is that of COBRA-like protein 11 from Arabidopsis thaliana (Mouse-ear cress).